The chain runs to 185 residues: Prenylated Rab acceptor protein 1 (185 aa).

The Cytoplasmic portion of the chain corresponds to 1–78 (MAVEKDQQKD…RNVEYYQSNY (78 aa)). The segment at 30-54 (AGREWLERRRATIRSWGSFVDQRRF) is required for interaction with prenylated RAB3A and VAMP2. 2 consecutive transmembrane segments (helical) span residues 79 to 94 (VFVF…ATSP) and 95 to 112 (MLLV…ILYL). Over 113-131 (RTLQSKFVLFGREVSPAHQ) the chain is Cytoplasmic. Transmembrane regions (helical) follow at residues 132–148 (YALA…LAGA) and 149–165 (GSAV…VIGS). A required for interaction with GDI1 region spans residues 165–185 (SHAAFHQIEAVDGEELQMEPV). The Cytoplasmic portion of the chain corresponds to 166–185 (HAAFHQIEAVDGEELQMEPV). Positions 175-185 (VDGEELQMEPV) are required for interaction with prenylated RAB3A and VAMP2. The interval 175–185 (VDGEELQMEPV) is homodimerization.

This sequence belongs to the PRA1 family. Homodimer. Interacts with VAMP2 (synaptobrevin-2), prenylated Rab proteins, GDI1, NDRG1 and PCLO.

It is found in the cell membrane. The protein localises to the cytoplasm. It localises to the golgi apparatus. The protein resides in the cytoplasmic vesicle. Its subcellular location is the secretory vesicle. It is found in the synaptic vesicle. Its function is as follows. General Rab protein regulator required for vesicle formation from the Golgi complex. May control vesicle docking and fusion by mediating the action of Rab GTPases to the SNARE complexes. In addition it inhibits the removal of Rab GTPases from the membrane by GDI1. The sequence is that of Prenylated Rab acceptor protein 1 (RABAC1) from Bos taurus (Bovine).